The sequence spans 408 residues: Dual-specificity RNA methyltransferase RlmN (408 aa).

E93 acts as the Proton acceptor in catalysis. Residues E99 to D379 form the Radical SAM core domain. A disulfide bond links C106 and C384. 3 residues coordinate [4Fe-4S] cluster: C113, C117, and C120. The interval S152–H196 is disordered. Over residues K157 to D178 the composition is skewed to basic and acidic residues. Residues G210–E211, S242, S264–H266, and N341 each bind S-adenosyl-L-methionine. C384 serves as the catalytic S-methylcysteine intermediate.

This sequence belongs to the radical SAM superfamily. RlmN family. [4Fe-4S] cluster serves as cofactor.

It is found in the cytoplasm. It carries out the reaction adenosine(2503) in 23S rRNA + 2 reduced [2Fe-2S]-[ferredoxin] + 2 S-adenosyl-L-methionine = 2-methyladenosine(2503) in 23S rRNA + 5'-deoxyadenosine + L-methionine + 2 oxidized [2Fe-2S]-[ferredoxin] + S-adenosyl-L-homocysteine. It catalyses the reaction adenosine(37) in tRNA + 2 reduced [2Fe-2S]-[ferredoxin] + 2 S-adenosyl-L-methionine = 2-methyladenosine(37) in tRNA + 5'-deoxyadenosine + L-methionine + 2 oxidized [2Fe-2S]-[ferredoxin] + S-adenosyl-L-homocysteine. In terms of biological role, specifically methylates position 2 of adenine 2503 in 23S rRNA and position 2 of adenine 37 in tRNAs. m2A2503 modification seems to play a crucial role in the proofreading step occurring at the peptidyl transferase center and thus would serve to optimize ribosomal fidelity. The protein is Dual-specificity RNA methyltransferase RlmN of Aromatoleum aromaticum (strain DSM 19018 / LMG 30748 / EbN1) (Azoarcus sp. (strain EbN1)).